The following is a 504-amino-acid chain: Maturase K (504 aa).

This sequence belongs to the intron maturase 2 family. MatK subfamily.

The protein localises to the plastid. Its subcellular location is the chloroplast. Usually encoded in the trnK tRNA gene intron. Probably assists in splicing its own and other chloroplast group II introns. In Nepenthes alata (Winged pitcher plant), this protein is Maturase K.